Consider the following 158-residue polypeptide: Transcription elongation factor GreA (158 aa).

It belongs to the GreA/GreB family.

Functionally, necessary for efficient RNA polymerase transcription elongation past template-encoded arresting sites. The arresting sites in DNA have the property of trapping a certain fraction of elongating RNA polymerases that pass through, resulting in locked ternary complexes. Cleavage of the nascent transcript by cleavage factors such as GreA or GreB allows the resumption of elongation from the new 3'terminus. GreA releases sequences of 2 to 3 nucleotides. The protein is Transcription elongation factor GreA of Rhizobium etli (strain ATCC 51251 / DSM 11541 / JCM 21823 / NBRC 15573 / CFN 42).